The primary structure comprises 426 residues: Synaptotagmin-13 (426 aa).

The Vesicular portion of the chain corresponds to Met1–Pro6. Residues Val7 to Leu29 traverse the membrane as a helical segment. Residues Cys30–Leu426 are Cytoplasmic-facing. C2 domains are found at residues Gln158–Gly275 and Gly287–His422.

It belongs to the synaptotagmin family. As to quaternary structure, interacts with NRXN1. As to expression, expressed in brain, spleen, kidney and testis.

The protein localises to the membrane. Its function is as follows. May be involved in transport vesicle docking to the plasma membrane. The chain is Synaptotagmin-13 (Syt13) from Rattus norvegicus (Rat).